Consider the following 324-residue polypeptide: ATP-dependent 6-phosphofructokinase (324 aa).

ATP is bound at residue glycine 15. 25–29 (RGVVR) lines the ADP pocket. Residues 76-77 (RF) and 106-109 (GDGS) each bind ATP. Position 107 (aspartate 107) interacts with Mg(2+). Substrate is bound at residue 130-132 (TID). The Proton acceptor role is filled by aspartate 132. Arginine 159 is a binding site for ADP. Substrate-binding positions include arginine 167 and 174 to 176 (MGR). ADP contacts are provided by residues 190 to 192 (GCE), lysine 216, and 218 to 220 (KRH). Substrate contacts are provided by residues glutamate 227, arginine 248, and 254–257 (HIQR).

The protein belongs to the phosphofructokinase type A (PFKA) family. ATP-dependent PFK group I subfamily. Prokaryotic clade 'B1' sub-subfamily. As to quaternary structure, homotetramer. Mg(2+) serves as cofactor.

Its subcellular location is the cytoplasm. The catalysed reaction is beta-D-fructose 6-phosphate + ATP = beta-D-fructose 1,6-bisphosphate + ADP + H(+). It functions in the pathway carbohydrate degradation; glycolysis; D-glyceraldehyde 3-phosphate and glycerone phosphate from D-glucose: step 3/4. With respect to regulation, allosterically activated by ADP and other diphosphonucleosides, and allosterically inhibited by phosphoenolpyruvate. Catalyzes the phosphorylation of D-fructose 6-phosphate to fructose 1,6-bisphosphate by ATP, the first committing step of glycolysis. This chain is ATP-dependent 6-phosphofructokinase, found in Haemophilus ducreyi (strain 35000HP / ATCC 700724).